A 171-amino-acid chain; its full sequence is Transcription factor pcr1 (171 aa).

Positions 10 to 73 (DEKRRRILER…FRLKSQLLAH (64 aa)) constitute a bZIP domain. The tract at residues 12 to 51 (KRRRILERNRIAASKFRQKKKEWIKELEQTANAAFEQSKR) is basic motif. A leucine-zipper region spans residues 52 to 66 (LQLLLSQLQQEAFRL). Residues 125 to 171 (QMHPSLQGLPPNQHPQMPPSSQQPNSDDVQQHMFSAAGLPRSLGGPI) are disordered. Positions 143–152 (PSSQQPNSDD) are enriched in low complexity.

This sequence belongs to the bZIP family. Heterodimer of pcr1/mts2 and atf1/mts1.

It localises to the nucleus. Involved in regulation of gene expression for sexual development. Binds and activates CRE sites (cAMP-response elements, also known as M26 meiotic recombination hotspots). This chain is Transcription factor pcr1 (pcr1), found in Schizosaccharomyces pombe (strain 972 / ATCC 24843) (Fission yeast).